Consider the following 1756-residue polypeptide: RANBP2-like and GRIP domain-containing protein 2 (1756 aa).

Phosphoserine is present on Ser21. TPR repeat units lie at residues 59-92, 583-616, and 647-680; these read PRAHRFLGLLYELEENTEKAVECYRRSLELNPPQ, QKMGRGLNSSYDQQEYIGRSVHYWKKVLPLLKII, and EDAHITFAILDAVHGNIEDAVTAFESIKSVVSYW. The segment at 759-804 is disordered; sequence GPLYKNGSLRNADSEIKHSTPSPTKYSLSPSKSYKYSPKTPPRWAE. The segment covering 777–796 has biased composition (low complexity); sequence STPSPTKYSLSPSKSYKYSP. In terms of domain architecture, RanBD1 1 spans 1029–1165; it reads HFEPVVQMPE…FEECQRLLLD (137 aa). Disordered stretches follow at residues 1206–1241 and 1299–1324; these read TKVTEEENKGSGTGAAGASDTTIKPNPENTGPTLEW and AKLNQSGTSVGTDEESDVTQEEERDG. Polar residues predominate over residues 1228 to 1237; sequence IKPNPENTGP. Over residues 1310–1322 the composition is skewed to acidic residues; that stretch reads TDEESDVTQEEER. The region spanning 1326–1462 is the RanBD1 2 domain; the sequence is YFEPVVPLPD…FDEAKTAQEK (137 aa). The span at 1573 to 1586 shows a compositional bias: polar residues; sequence NDSETSSVAQSGSE. Residues 1573-1614 form a disordered region; sequence NDSETSSVAQSGSESKVEPKKCELSKNSDIEQSSDSKVKNLS. Over residues 1587 to 1610 the composition is skewed to basic and acidic residues; it reads SKVEPKKCELSKNSDIEQSSDSKV. In terms of domain architecture, GRIP spans 1693–1743; the sequence is QEESAANVEHLKNVLLQFIFLKPGSERESLLPVINTMLQLSPEEKGKLAAV.

The sequence is that of RANBP2-like and GRIP domain-containing protein 2 (RGPD2) from Homo sapiens (Human).